The primary structure comprises 383 residues: 4-hydroxy-3-methylbut-2-en-1-yl diphosphate synthase (flavodoxin) (383 aa).

Residues Cys-275, Cys-278, Cys-310, and Glu-317 each contribute to the [4Fe-4S] cluster site.

It belongs to the IspG family. The cofactor is [4Fe-4S] cluster.

The catalysed reaction is (2E)-4-hydroxy-3-methylbut-2-enyl diphosphate + oxidized [flavodoxin] + H2O + 2 H(+) = 2-C-methyl-D-erythritol 2,4-cyclic diphosphate + reduced [flavodoxin]. It functions in the pathway isoprenoid biosynthesis; isopentenyl diphosphate biosynthesis via DXP pathway; isopentenyl diphosphate from 1-deoxy-D-xylulose 5-phosphate: step 5/6. In terms of biological role, converts 2C-methyl-D-erythritol 2,4-cyclodiphosphate (ME-2,4cPP) into 1-hydroxy-2-methyl-2-(E)-butenyl 4-diphosphate. In Dinoroseobacter shibae (strain DSM 16493 / NCIMB 14021 / DFL 12), this protein is 4-hydroxy-3-methylbut-2-en-1-yl diphosphate synthase (flavodoxin).